The sequence spans 303 residues: N-acetyl-D-glucosamine kinase (303 aa).

Residues 4 to 11 (GFDIGGTK) and 133 to 140 (GVGGGLIF) each bind ATP. Positions 157, 177, 179, and 184 each coordinate Zn(2+).

The protein belongs to the ROK (NagC/XylR) family. NagK subfamily.

The catalysed reaction is N-acetyl-D-glucosamine + ATP = N-acetyl-D-glucosamine 6-phosphate + ADP + H(+). It functions in the pathway cell wall biogenesis; peptidoglycan recycling. Catalyzes the phosphorylation of N-acetyl-D-glucosamine (GlcNAc) derived from cell-wall degradation, yielding GlcNAc-6-P. The protein is N-acetyl-D-glucosamine kinase of Shigella sonnei (strain Ss046).